The primary structure comprises 1256 residues: Cohesin subunit SA-3 (1256 aa).

The span at 1–22 (MPTLWSPSTQHHGSSSGSMSSP) shows a compositional bias: low complexity. Residues 1–110 (MPTLWSPSTQ…GGNDKNKSVP (110 aa)) form a disordered region. The segment covering 72 to 83 (RNVRKRAAKRPP) has biased composition (basic residues). The region spanning 324–409 (FVHRYRDILP…NRFKDRMVSM (86 aa)) is the SCD domain. 2 disordered regions span residues 1096–1169 (RRLQ…GPEL) and 1230–1256 (KLLH…MEDF). A compositionally biased stretch (polar residues) spans 1113–1125 (NSGPTTPTLTSTA). Residues 1126–1140 (VKRRQSPRTVGKRQK) show a composition bias toward basic residues. Over residues 1144 to 1166 (GPGPGPGPGPGPGPGPGPGPGPG) the composition is skewed to pro residues. Position 1234 is a phosphoserine (S1234).

This sequence belongs to the SCC3 family. Component of the meiosis-specific cohesin complex, which also contains the SMC1 (SMC1A or SMC1B) and SMC3 heterodimer. Such complex likely contains RAD21, or the meiosis-specific related protein REC8. Interacts with CCDC79/TERB1; recruiting cohesin to telomeres to develop structural rigidity. Phosphorylated. As to expression, testis specific.

The protein resides in the nucleus. It is found in the chromosome. Functionally, meiosis specific component of cohesin complex. The cohesin complex is required for the cohesion of sister chromatids after DNA replication. The cohesin complex apparently forms a large proteinaceous ring within which sister chromatids can be trapped. At anaphase, the complex is cleaved and dissociates from chromatin, allowing sister chromatids to segregate. The meiosis-specific cohesin complex probably replaces mitosis specific cohesin complex when it dissociates from chromatin during prophase I. In Rattus norvegicus (Rat), this protein is Cohesin subunit SA-3 (Stag3).